The chain runs to 127 residues: Methylglyoxal synthase (127 aa).

The 127-residue stretch at 1–127 (MEGQRCIALI…ENLIDFNSAD (127 aa)) folds into the MGS-like domain. Substrate contacts are provided by residues His12, Lys16, 38 to 41 (TGTT), and 59 to 60 (SG). Residue Asp65 is the Proton donor/acceptor of the active site. Residue His92 participates in substrate binding.

The protein belongs to the methylglyoxal synthase family.

The enzyme catalyses dihydroxyacetone phosphate = methylglyoxal + phosphate. Catalyzes the formation of methylglyoxal from dihydroxyacetone phosphate. The chain is Methylglyoxal synthase from Agrobacterium fabrum (strain C58 / ATCC 33970) (Agrobacterium tumefaciens (strain C58)).